A 101-amino-acid polypeptide reads, in one-letter code: MRIVIYSMLVLLIAIQYPLWLGKGGWLKVYEMERQVELQEAKNSLLALRNAKLSGDVKDLKDGTRAIEERACVEHGLIKEGEFFVQILPADKSSDTQVTKQ.

The Cytoplasmic portion of the chain corresponds to 1–3; that stretch reads MRI. A helical transmembrane segment spans residues 4-21; the sequence is VIYSMLVLLIAIQYPLWL. At 22-101 the chain is on the periplasmic side; it reads GKGGWLKVYE…KSSDTQVTKQ (80 aa). Residues 33 to 53 adopt a coiled-coil conformation; that stretch reads ERQVELQEAKNSLLALRNAKL.

Belongs to the FtsB family. In terms of assembly, part of a complex composed of FtsB, FtsL and FtsQ.

It localises to the cell inner membrane. In terms of biological role, essential cell division protein. May link together the upstream cell division proteins, which are predominantly cytoplasmic, with the downstream cell division proteins, which are predominantly periplasmic. The polypeptide is Cell division protein FtsB (Polynucleobacter necessarius subsp. necessarius (strain STIR1)).